Here is a 511-residue protein sequence, read N- to C-terminus: Bifunctional purine biosynthesis protein PurH (511 aa).

In terms of domain architecture, MGS-like spans 1–145 (MKKRALVSVS…KNHKFVSVIV (145 aa)).

The protein belongs to the PurH family.

It catalyses the reaction (6R)-10-formyltetrahydrofolate + 5-amino-1-(5-phospho-beta-D-ribosyl)imidazole-4-carboxamide = 5-formamido-1-(5-phospho-D-ribosyl)imidazole-4-carboxamide + (6S)-5,6,7,8-tetrahydrofolate. It carries out the reaction IMP + H2O = 5-formamido-1-(5-phospho-D-ribosyl)imidazole-4-carboxamide. It participates in purine metabolism; IMP biosynthesis via de novo pathway; 5-formamido-1-(5-phospho-D-ribosyl)imidazole-4-carboxamide from 5-amino-1-(5-phospho-D-ribosyl)imidazole-4-carboxamide (10-formyl THF route): step 1/1. The protein operates within purine metabolism; IMP biosynthesis via de novo pathway; IMP from 5-formamido-1-(5-phospho-D-ribosyl)imidazole-4-carboxamide: step 1/1. The sequence is that of Bifunctional purine biosynthesis protein PurH from Bacillus cereus (strain B4264).